We begin with the raw amino-acid sequence, 818 residues long: Sodium/hydrogen exchanger 1 (818 aa).

Residues 1–98 (MLLWPGASGL…FPVLGIDYQH (98 aa)) lie on the Extracellular side of the membrane. A disordered region spans residues 44 to 76 (STIRGSEPPRERSIGDVTTAPPELAPESRPVNH). The N-linked (GlcNAc...) asparagine glycan is linked to Asn75. Residues 99–121 (VRIPFEIALWILLACLMKIGFHV) form a helical membrane-spanning segment. Topologically, residues 122–130 (IPTISSIVP) are cytoplasmic. The chain crosses the membrane as a helical span at residues 131–148 (ESCLLIVVGLLVGGLIKG). At 149-158 (VGETPPILQS) the chain is on the extracellular side. Residues 159 to 176 (EVFFLFLLPPIILDAGYF) traverse the membrane as a helical segment. Topologically, residues 177–186 (LPLRQFTENL) are cytoplasmic. Residues 187–215 (GTILIFAVVGTLWNAFFLGGLMYAVCLVG) form a helical membrane-spanning segment. Residues 216–222 (GEQINNI) are Extracellular-facing. A helical membrane pass occupies residues 223 to 249 (GLLENLLFGSIISAVDPVAVLAVFEEI). At 250–252 (HIN) the chain is on the cytoplasmic side. The chain crosses the membrane as a helical span at residues 253 to 283 (ELLHILVFGESLLNDAVTVVLYHLFEEFANY). Residues 284 to 287 (DRVG) are Extracellular-facing. A helical membrane pass occupies residues 288-322 (IVDIILGFLSFFVVSLGGVFVGVVYGVIAAFTSRF). Over 323–328 (TSHIRV) the chain is Cytoplasmic. Residues 329–341 (IEPLFVFLYSYMA) form a helical membrane-spanning segment. Topologically, residues 342–350 (YLSAELFHL) are extracellular. A helical transmembrane segment spans residues 351–371 (SGIMALIASGVVMRPYVEANI). The Cytoplasmic portion of the chain corresponds to 372-373 (SH). A helical transmembrane segment spans residues 374–404 (KSHTTIKYFLKMWSSVSETLIFIFLGVSTVA). Residues 405 to 410 (GSHHWN) lie on the Extracellular side of the membrane. A helical membrane pass occupies residues 411–438 (WTFVISTLLFCLIARVLGVLGLTWFINK). The Cytoplasmic segment spans residues 439-444 (FRIVKL). Residues 445–469 (TPKDQFIIAYGGLRGAIAFSLGYLL) form a helical membrane-spanning segment. Over 470 to 475 (DKKHFP) the chain is Extracellular. Residues 476-505 (MCDLFLTAIITVIFFTVFVQGMTIRPLVDL) traverse the membrane as a helical segment. The interaction with TESC stretch occupies residues 503 to 545 (VDLLAVKKKQETKRSINEEIHTQFLDHLLTGIEDICGHYGHHH). Topologically, residues 506–818 (LAVKKKQETK…EGEPFIPKGQ (313 aa)) are cytoplasmic. The segment at 509–516 (KKKQETKR) is PI(4,5)P2-binding region. The tract at residues 515 to 545 (KRSINEEIHTQFLDHLLTGIEDICGHYGHHH) is interaction with CHP2. Residues 540–545 (HYGHHH) form a confers pH-dependent PI(4,5)P2 binding region. Positions 552 to 560 (RFNKKYVKK) are PI(4,5)P2-binding region. A phosphoserine mark is found at Ser599 and Ser602. At Thr603 the chain carries Phosphothreonine. Ser605 and Ser648 each carry phosphoserine. The tract at residues 633–818 (KILRNNLQKT…EGEPFIPKGQ (186 aa)) is interaction with TESC. The interaction with CALM1 stretch occupies residues 633–818 (KILRNNLQKT…EGEPFIPKGQ (186 aa)). Residues 684–687 (LTVP) form an interaction with PPP3CA region. Phosphoserine occurs at positions 693, 697, and 703. Residues 715 to 720 (PVITID) form an interaction with PPP3CA region. Phosphoserine is present on residues Ser723, Ser726, and Ser729. The interval 741–818 (VLGLSRDPGR…EGEPFIPKGQ (78 aa)) is disordered. Thr782 bears the Phosphothreonine mark. Residues 785-794 (PSDSPSSQRI) are compositionally biased toward polar residues. 3 positions are modified to phosphoserine: Ser788, Ser790, and Ser799.

The protein belongs to the monovalent cation:proton antiporter 1 (CPA1) transporter (TC 2.A.36) family. As to quaternary structure, homodimer; dimerization is crucial for its function. Oligomer. Interacts with CALM in a calcium-dependent manner. Interacts with TESC. Interacts (via the juxtamembrane region of the cytoplasmic C-terminal domain) with CHP1; the interaction occurs at the plasma membrane in a calcium-dependent manner. Interacts with CHP2; the interaction occurs in a calcium-dependent manner. Interacts with EZR; regulates the cytoskeletal interactions of SLC9A1 and promotes stress fiber formation. Ubiquitinated, leading to its degradation by the proteasome. Ubiquitination is reduced by CHP1. In terms of processing, O-glycosylated. Post-translationally, palmitoylated; may play a major role in SLC9A1 regulation. Phosphorylation at Thr-782 increases SLC9A1 activity. Specifically dephosphorylated at Thr-782 by PPP3CA that negatively regulates SLC9A1 activity. Phosphorylation at Ser-648 by AKT1 reduces SLC9A1 binding to CALM1.

The protein resides in the cell membrane. Its subcellular location is the basolateral cell membrane. The catalysed reaction is Na(+)(in) + H(+)(out) = Na(+)(out) + H(+)(in). The enzyme catalyses Li(+)(out) + H(+)(in) = Li(+)(in) + H(+)(out). It catalyses the reaction Li(+)(in) + Na(+)(out) = Li(+)(out) + Na(+)(in). With respect to regulation, activated at acidic pHs. Inhibited by amiloride and 5-amino-substituted derivatives. Inhibited by cariporide and eniporide. Phosphatidylinositol 4,5-bisphosphate (PI(4,5)P2) and phosphatidylinositol 3,4,5-trisphosphate (PI(3,4,5)P3) bind and differentially regulate SLC9A1 activity. Its function is as follows. Electroneutral Na(+) /H(+) antiporter that extrudes Na(+) in exchange for external protons driven by the inward sodium ion chemical gradient, protecting cells from acidification that occurs from metabolism. Exchanges intracellular H(+) ions for extracellular Na(+) in 1:1 stoichiometry. Plays a key role in maintening intracellular pH neutral and cell volume, and thus is important for cell growth, proliferation, migration and survival. In addition, can transport lithium Li(+) and also functions as a Na(+)/Li(+) antiporter. SLC9A1 also functions in membrane anchoring and organization of scaffolding complexes that coordinate signaling inputs. The sequence is that of Sodium/hydrogen exchanger 1 (SLC9A1) from Bos taurus (Bovine).